The sequence spans 378 residues: Cell death-related nuclease 6 (378 aa).

The N-terminal stretch at 1–17 (MIRQIILIVSLIGISNA) is a signal peptide. N-linked (GlcNAc...) asparagine glycans are attached at residues N51, N92, and N111.

It belongs to the DNase II family.

In terms of biological role, involved in apoptotic DNA degradation. The protein is Cell death-related nuclease 6 (crn-6) of Caenorhabditis elegans.